The chain runs to 238 residues: Ubiquinone biosynthesis O-methyltransferase (238 aa).

4 residues coordinate S-adenosyl-L-methionine: R36, G56, D77, and M125.

It belongs to the methyltransferase superfamily. UbiG/COQ3 family.

The enzyme catalyses a 3-demethylubiquinol + S-adenosyl-L-methionine = a ubiquinol + S-adenosyl-L-homocysteine + H(+). It catalyses the reaction a 3-(all-trans-polyprenyl)benzene-1,2-diol + S-adenosyl-L-methionine = a 2-methoxy-6-(all-trans-polyprenyl)phenol + S-adenosyl-L-homocysteine + H(+). The protein operates within cofactor biosynthesis; ubiquinone biosynthesis. In terms of biological role, O-methyltransferase that catalyzes the 2 O-methylation steps in the ubiquinone biosynthetic pathway. This Histophilus somni (strain 2336) (Haemophilus somnus) protein is Ubiquinone biosynthesis O-methyltransferase.